Consider the following 224-residue polypeptide: Urease accessory protein UreF (224 aa).

The protein belongs to the UreF family. As to quaternary structure, ureD, UreF and UreG form a complex that acts as a GTP-hydrolysis-dependent molecular chaperone, activating the urease apoprotein by helping to assemble the nickel containing metallocenter of UreC. The UreE protein probably delivers the nickel.

The protein resides in the cytoplasm. Its function is as follows. Required for maturation of urease via the functional incorporation of the urease nickel metallocenter. In Escherichia coli O157:H7, this protein is Urease accessory protein UreF.